We begin with the raw amino-acid sequence, 279 residues long: Diaminopimelate epimerase (279 aa).

Positions 13 and 66 each coordinate substrate. The Proton donor role is filled by cysteine 75. Substrate-binding positions include 76–77 (GN), asparagine 162, asparagine 195, and 213–214 (ER). Cysteine 222 serves as the catalytic Proton acceptor. 223 to 224 (GT) provides a ligand contact to substrate.

The protein belongs to the diaminopimelate epimerase family. In terms of assembly, homodimer.

It localises to the cytoplasm. The catalysed reaction is (2S,6S)-2,6-diaminopimelate = meso-2,6-diaminopimelate. Its pathway is amino-acid biosynthesis; L-lysine biosynthesis via DAP pathway; DL-2,6-diaminopimelate from LL-2,6-diaminopimelate: step 1/1. Its function is as follows. Catalyzes the stereoinversion of LL-2,6-diaminopimelate (L,L-DAP) to meso-diaminopimelate (meso-DAP), a precursor of L-lysine and an essential component of the bacterial peptidoglycan. The protein is Diaminopimelate epimerase of Synechocystis sp. (strain ATCC 27184 / PCC 6803 / Kazusa).